Reading from the N-terminus, the 381-residue chain is uncharacterized protein (381 aa).

Transmembrane regions (helical) follow at residues 59–79 (LITL…LYYM), 84–104 (GVAP…YQTM), 147–167 (VGVN…FFMA), 190–210 (SMMA…FNTI), 222–242 (LVLL…TFSI), 250–270 (ILTN…SIYW), 284–304 (HYFM…LILA), 311–331 (LSPI…IYKF), and 344–364 (VYFF…VTSL).

The protein belongs to the CDP-alcohol phosphatidyltransferase class-I family.

Its subcellular location is the membrane. This is an uncharacterized protein from Dictyostelium discoideum (Social amoeba).